The chain runs to 312 residues: DNA-directed RNA polymerase subunit alpha (312 aa).

The interval 1 to 229 (MLQYQIDRIE…ELFQPLATVT (229 aa)) is alpha N-terminal domain (alpha-NTD). Positions 246-312 (IPLEELNLSV…ISIPQSRTSA (67 aa)) are alpha C-terminal domain (alpha-CTD).

It belongs to the RNA polymerase alpha chain family. In cyanobacteria the RNAP catalytic core is composed of 2 alpha, 1 beta, 1 beta', 1 gamma and 1 omega subunit. When a sigma factor is associated with the core the holoenzyme is formed, which can initiate transcription.

It carries out the reaction RNA(n) + a ribonucleoside 5'-triphosphate = RNA(n+1) + diphosphate. DNA-dependent RNA polymerase catalyzes the transcription of DNA into RNA using the four ribonucleoside triphosphates as substrates. The protein is DNA-directed RNA polymerase subunit alpha of Parasynechococcus marenigrum (strain WH8102).